Consider the following 252-residue polypeptide: Probable NADP-dependent dehydrogenase HI_1430 (252 aa).

An NADP(+)-binding site is contributed by L7–I31. S137 contacts substrate. The Proton acceptor role is filled by Y150.

It belongs to the short-chain dehydrogenases/reductases (SDR) family.

In Haemophilus influenzae (strain ATCC 51907 / DSM 11121 / KW20 / Rd), this protein is Probable NADP-dependent dehydrogenase HI_1430.